Consider the following 737-residue polypeptide: uncharacterized protein (737 aa).

Transmembrane regions (helical) follow at residues 11-31 (LSLL…LRPL), 36-56 (ETKH…LTFF), 60-80 (WFVT…ILFY), 118-138 (TLLF…WVIY), 142-162 (ILFF…FTPY), 164-184 (ATFA…LLYL), and 200-220 (VLKW…FGLA). The segment at 556-611 (PAQFTSSDTKDSGSDSSSSPKKAKEKQKEEKKQPQKEEKQKEKREPAVSKKPSASH) is disordered. A compositionally biased stretch (basic and acidic residues) spans 581–603 (KQKEEKKQPQKEEKQKEKREPAV). A helical membrane pass occupies residues 618-638 (LYAALAVLAVLLVAAVLLYVF).

It is found in the cell membrane. This is an uncharacterized protein from Bacillus subtilis (strain 168).